The chain runs to 276 residues: Glutamate racemase (276 aa).

Substrate is bound by residues 10-11 and 42-43; these read DS and YG. The active-site Proton donor/acceptor is the Cys-73. 74–75 is a binding site for substrate; that stretch reads NS. Cys-183 serves as the catalytic Proton donor/acceptor. 184 to 185 serves as a coordination point for substrate; that stretch reads TH.

It belongs to the aspartate/glutamate racemases family.

The enzyme catalyses L-glutamate = D-glutamate. Its pathway is cell wall biogenesis; peptidoglycan biosynthesis. Functionally, provides the (R)-glutamate required for cell wall biosynthesis. This chain is Glutamate racemase, found in Parafrankia sp. (strain EAN1pec).